Here is a 563-residue protein sequence, read N- to C-terminus: Arginine--tRNA ligase (563 aa).

Positions 121 to 131 (PNIAKPFSIGH) match the 'HIGH' region motif.

It belongs to the class-I aminoacyl-tRNA synthetase family. Monomer.

Its subcellular location is the cytoplasm. It carries out the reaction tRNA(Arg) + L-arginine + ATP = L-arginyl-tRNA(Arg) + AMP + diphosphate. The chain is Arginine--tRNA ligase from Streptococcus equi subsp. equi (strain 4047).